We begin with the raw amino-acid sequence, 341 residues long: KH domain-containing RNA-binding protein QKI (341 aa).

Residues P11 to L82 are qua1 domain; involved in homodimerization. A KH domain is found at Y87–V153. The interval A182–A213 is qua2 domain; involved in RNA binding. S188 is subject to Phosphoserine. R227 is subject to Omega-N-methylarginine. Asymmetric dimethylarginine; by CARM1; alternate is present on R242. R242 is subject to Omega-N-methylarginine; alternate. The residue at position 256 (R256) is an Omega-N-methylarginine. The short motif at P276–P279 is the SH3-binding element. Residues R324–R330 carry the Nuclear localization signal motif.

This sequence belongs to the quaking family. Homodimer; does not require RNA to homodimerize. Able to heterodimerize with BICC1. Methylated by PRMT1. In terms of processing, tyrosine phosphorylated at its C-terminus, probably by FYN. Phosphorylation leads to decreased mRNA-binding affinity, affecting transport and/or stabilization of MBP mRNA. Post-translationally, ubiquitinated by RNF6 in macrophages, leading to its degradation. As to expression, present in myelinating oligodendrocytes (at protein level).

It localises to the nucleus. It is found in the cytoplasm. In terms of biological role, RNA reader protein, which recognizes and binds specific RNAs, thereby regulating RNA metabolic processes, such as pre-mRNA splicing, circular RNA (circRNA) formation, mRNA export, mRNA stability and/or translation. Involved in various cellular processes, such as mRNA storage into stress granules, apoptosis, lipid deposition, interferon response, glial cell fate and development. Binds to the 5'-NACUAAY-N(1,20)-UAAY-3' RNA core sequence. Acts as a mRNA modification reader that specifically recognizes and binds mRNA transcripts modified by internal N(7)-methylguanine (m7G). Promotes the formation of circular RNAs (circRNAs) during the epithelial to mesenchymal transition and in cardiomyocytes: acts by binding to sites flanking circRNA-forming exons. CircRNAs are produced by back-splicing circularization of pre-mRNAs. Plays a central role in myelinization via 3 distinct mechanisms. First, acts by protecting and promoting stability of target mRNAs such as MBP, SIRT2 and CDKN1B, which promotes oligodendrocyte differentiation. Second, participates in mRNA transport by regulating the nuclear export of MBP mRNA. Finally, indirectly regulates mRNA splicing of MAG pre-mRNA during oligodendrocyte differentiation by acting as a negative regulator of MAG exon 12 alternative splicing: acts by binding to HNRNPA1 mRNA splicing factor, preventing its translation. Involved in microglia differentiation and remyelination by regulating microexon alternative splicing of the Rho GTPase pathway. Involved in macrophage differentiation: promotes monocyte differentiation by regulating pre-mRNA splicing in naive peripheral blood monocytes. Acts as an important regulator of muscle development: required for the contractile function of cardiomyocytes by regulating alternative splicing of cardiomyocyte transcripts. Acts as a negative regulator of thermogenesis by decreasing stability, nuclear export and translation of mRNAs encoding PPARGC1A and UCP1. Also required for visceral endoderm function and blood vessel development. May also play a role in smooth muscle development. In addition to its RNA-binding activity, also acts as a nuclear transcription coactivator for SREBF2/SREBP2. This chain is KH domain-containing RNA-binding protein QKI, found in Rattus norvegicus (Rat).